A 445-amino-acid chain; its full sequence is Phosphoglucosamine mutase (445 aa).

Serine 102 serves as the catalytic Phosphoserine intermediate. Serine 102, aspartate 241, aspartate 243, and aspartate 245 together coordinate Mg(2+). Serine 102 bears the Phosphoserine mark.

The protein belongs to the phosphohexose mutase family. Mg(2+) serves as cofactor. Activated by phosphorylation.

It carries out the reaction alpha-D-glucosamine 1-phosphate = D-glucosamine 6-phosphate. In terms of biological role, catalyzes the conversion of glucosamine-6-phosphate to glucosamine-1-phosphate. This Escherichia coli O81 (strain ED1a) protein is Phosphoglucosamine mutase.